Reading from the N-terminus, the 389-residue chain is Probable serine/threonine-protein kinase PBL24 (389 aa).

Positions M1–R36 are disordered. A lipid anchor (S-palmitoyl cysteine) is attached at C3. One can recognise a Protein kinase domain in the interval F71 to M348. Residues I77–V85 and K100 each bind ATP. Catalysis depends on D198, which acts as the Proton acceptor. Phosphoserine occurs at positions 202 and 232. The residue at position 238 (T238) is a Phosphothreonine. Y246 is subject to Phosphotyrosine.

It belongs to the protein kinase superfamily. Ser/Thr protein kinase family.

Its subcellular location is the cell membrane. It catalyses the reaction L-seryl-[protein] + ATP = O-phospho-L-seryl-[protein] + ADP + H(+). It carries out the reaction L-threonyl-[protein] + ATP = O-phospho-L-threonyl-[protein] + ADP + H(+). May be involved in plant defense signaling. This is Probable serine/threonine-protein kinase PBL24 from Arabidopsis thaliana (Mouse-ear cress).